The following is a 950-amino-acid chain: Protocadherin alpha-9 (950 aa).

The signal sequence occupies residues 1–29; it reads MLYSSRGDPEGQPLLLSLLILAMWVVGSG. 6 consecutive Cadherin domains span residues 30 to 133, 134 to 242, 243 to 350, 351 to 455, 456 to 565, and 588 to 678; these read QLHY…PPVF, PATQ…APVF, DRTL…APQL, TIKT…APAF, AQSE…APAL, and GVVV…APKS. The Extracellular segment spans residues 30-697; sequence QLHYSVPEEA…GPEVTLVDVN (668 aa). Asn254 and Asn265 each carry an N-linked (GlcNAc...) asparagine glycan. Asn548 is a glycosylation site (N-linked (GlcNAc...) asparagine). A helical membrane pass occupies residues 698-718; it reads VYLIIAICAVSSLLVLTLLLY. The Cytoplasmic segment spans residues 719–950; that stretch reads TVLRCSAMPT…GNSTTDNSDQ (232 aa). One copy of the PXXP 1 repeat lies at 734-737; the sequence is PGKP. The interval 734–894 is 5 X 4 AA repeats of P-X-X-P; the sequence is PGKPTLVCSS…PDKFIIPGSP (161 aa). Disordered regions lie at residues 770-808, 827-856, and 871-950; these read MAFSPGLSPCAGSTERTGEPSASSDSTGKPRQPNPDWRY, ILRAGPGGPDQQWPTVSSATPEPEAGEVSP, and YGPG…NSDQ. A compositionally biased stretch (polar residues) spans 789 to 798; it reads PSASSDSTGK. 4 PXXP repeats span residues 799–802, 832–835, 873–876, and 891–894; these read PRQP, PGGP, PGNP, and PGSP. The segment covering 909-923 has biased composition (basic and acidic residues); it reads DKSDFITFGKKEETK.

It localises to the cell membrane. Potential calcium-dependent cell-adhesion protein. May be involved in the establishment and maintenance of specific neuronal connections in the brain. The sequence is that of Protocadherin alpha-9 (PCDHA9) from Homo sapiens (Human).